A 2167-amino-acid polypeptide reads, in one-letter code: Myosin-VIIa (2167 aa).

Residues 63–733 (QGVEDMISLG…HDLFLEQERD (671 aa)) form the Myosin motor domain. An ATP-binding site is contributed by 156–163 (GESGAGKT). Actin-binding regions lie at residues 612-634 (LDAL…KPNE) and 712-726 (QLGH…AHDL). IQ domains lie at 736 to 758 (LTRK…RFLR), 759 to 788 (LRAA…GYMR), 805 to 827 (LRGH…EYGH), and 828 to 857 (KMWA…EHKQ). A coiled-coil region spans residues 886 to 919 (QHYRDRLHELERREIQEQLENRRRVEVNMNIIND). The region spanning 1008–1245 (YAKKALKHPL…PSWLELQATK (238 aa)) is the MyTH4 1 domain. An FERM 1 domain is found at 1250–1560 (IMLPITFMDG…YFLDGLKKRS (311 aa)). Residues 1558–1627 (KRSKYVIALQ…PAETVYVLPT (70 aa)) enclose the SH3 domain. Phosphoserine is present on residues Ser1651 and Ser1654. The region spanning 1701 to 1849 (YSRDPIKAPL…PHQVEVEAIQ (149 aa)) is the MyTH4 2 domain. The FERM 2 domain maps to 1855-2158 (IFHKVYFPDD…SYISLMLTNM (304 aa)). Phosphothreonine is present on Thr2045.

It belongs to the TRAFAC class myosin-kinesin ATPase superfamily. Myosin family. As to quaternary structure, homodimerizes in a two headed molecule through the formation of a coiled-coil rod. Homodimers motility is approximately 8-10 times slower than that of myosin V, and its step size is 30 nm, which is consistent with the presence of five IQ motifs in its neck region. Interacts with Cad99C (via the cytoplasmic domain). Interacts with zip and Sans. Expressed in the setae, micro- and macrochaetae on the head, thorax and wing.

The protein resides in the cytoplasm. Its subcellular location is the cell cortex. It localises to the cell projection. It is found in the microvillus. Myosins are actin-based motor molecules with ATPase activity. Unconventional myosins serve in intracellular movements: can function in cells as a single-molecule cargo transporter. A very slow and high-duty-ratio motor, may be suitable for tension maintenance of actin filaments. Their highly divergent tails are presumed to bind to membranous compartments, which would be moved relative to actin filaments. Plays a key role in the formation of cellular projections and other actin-based functions required for embryonic and larval viability. Necessary for auditory transduction: plays a role in Johnston's organ organization by functioning in scolopidial apical attachment and therefore to acoustic stimulus propagation from the antenna a2/a3 joint to transducing elements. Interaction with the myosin zip may be important for its function in scolopidial apical attachment. During oogenesis it has Cad99c-dependent and Cad99c-independent roles in regulating the shape and spacing of the follicle cell microvilli which secrete eggshell material such as the vitelline membrane. May be required for the normal expression of Cad99c in the follicle cell microvilli. In Drosophila melanogaster (Fruit fly), this protein is Myosin-VIIa.